The following is a 207-amino-acid chain: Dephospho-CoA kinase (207 aa).

The 200-residue stretch at 4 to 203 folds into the DPCK domain; it reads VIGLTGGIAS…EEGYIEKPNY (200 aa). Position 12–17 (12–17) interacts with ATP; sequence ASGKST.

The protein belongs to the CoaE family.

Its subcellular location is the cytoplasm. The catalysed reaction is 3'-dephospho-CoA + ATP = ADP + CoA + H(+). It participates in cofactor biosynthesis; coenzyme A biosynthesis; CoA from (R)-pantothenate: step 5/5. Functionally, catalyzes the phosphorylation of the 3'-hydroxyl group of dephosphocoenzyme A to form coenzyme A. The polypeptide is Dephospho-CoA kinase (Staphylococcus aureus (strain bovine RF122 / ET3-1)).